Reading from the N-terminus, the 298-residue chain is CD-NTase-associated protein 6 (298 aa).

ATP is bound by residues 80–85 and 204–205; these read GTGKTA and RR.

It belongs to the AAA ATPase family. In terms of assembly, homohexamer, forms a 1:1:6 CdnC:Cap7:Cap6 complex.

Regulates complex assembly in a CBASS antivirus system. CBASS (cyclic oligonucleotide-based antiphage signaling system) provides immunity against bacteriophage. The CD-NTase protein synthesizes cyclic nucleotides in response to infection; these serve as specific second messenger signals. The signals activate a diverse range of effectors, leading to bacterial cell death and thus abortive phage infection. A type III CBASS system. Expression of this CBASS system (Cap18-Cap6-Cap7-CdnC-CapW-Cap17) in a susceptible E.coli (strain MG1655) confers resistance to bacteriophage P1. Binds and disassembles an active CdnC:Cap7 complex, inhibiting the complex's ability to synthesize cyclic nucleotide second messengers. An AAA+-ATPase remodeler, in the absence of foreign threat Cap6 probably maintains the Cap7 protein in its open, inactive state. Once activated (presumably by a bacteriophage protein) Cap7 binds to and activates its cognate CD-NTase (CdnC in this bacteria) to synthesize a cyclic nucleotide second messenger which leads to abortive phage infection. The polypeptide is CD-NTase-associated protein 6 (Escherichia coli (strain KTE188)).